The primary structure comprises 253 residues: Proteasome subunit alpha (253 aa).

Residues 229–253 form a disordered region; the sequence is ADESQSYIDDIEDAADDSDDDDDEE. A compositionally biased stretch (acidic residues) spans 237 to 253; it reads DDIEDAADDSDDDDDEE.

The protein belongs to the peptidase T1A family. As to quaternary structure, the 20S proteasome core is composed of 14 alpha and 14 beta subunits that assemble into four stacked heptameric rings, resulting in a barrel-shaped structure. The two inner rings, each composed of seven catalytic beta subunits, are sandwiched by two outer rings, each composed of seven alpha subunits. The catalytic chamber with the active sites is on the inside of the barrel. Has a gated structure, the ends of the cylinder being occluded by the N-termini of the alpha-subunits. Is capped at one or both ends by the proteasome regulatory ATPase, PAN.

Its subcellular location is the cytoplasm. Its activity is regulated as follows. The formation of the proteasomal ATPase PAN-20S proteasome complex, via the docking of the C-termini of PAN into the intersubunit pockets in the alpha-rings, triggers opening of the gate for substrate entry. Interconversion between the open-gate and close-gate conformations leads to a dynamic regulation of the 20S proteasome proteolysis activity. Functionally, component of the proteasome core, a large protease complex with broad specificity involved in protein degradation. The sequence is that of Proteasome subunit alpha from Halobacterium salinarum (strain ATCC 29341 / DSM 671 / R1).